We begin with the raw amino-acid sequence, 364 residues long: Hsp70-binding protein 1 (364 aa).

The segment at 1 to 75 (MSDEGSRGSR…DPPPEPMSEE (75 aa)) is disordered. Positions 23-42 (SSGGGGGGGGGGSSSAGGSG) are enriched in gly residues. ARM repeat units lie at residues 137-179 (ENMD…TCSQ), 182-222 (AAIQ…CLVR), 225-264 (EAGL…NLLV), and 267-306 (PEHR…SLVT). 2 positions are modified to phosphoserine: serine 356 and serine 361.

Interacts with the ATP-binding domain of HSPA1A. Detected in a ternary complex containing STUB1, HSPA1A and HSPBP1. Interacts with PGLYRP1; this interaction blocks the cytotoxic activity of the PGLYRP1-HSPA1A complex.

Inhibits HSPA1A chaperone activity by changing the conformation of the ATP-binding domain of HSPA1A and interfering with ATP binding. Interferes with ubiquitination mediated by STUB1 and inhibits chaperone-assisted degradation of target proteins. The chain is Hsp70-binding protein 1 (HSPBP1) from Macaca fascicularis (Crab-eating macaque).